We begin with the raw amino-acid sequence, 832 residues long: FAST kinase domain-containing protein 1, mitochondrial (832 aa).

The RAP domain occupies 765–825 (VAIEFLDSKA…KDAWIDYLRK (61 aa)).

Belongs to the FAST kinase family.

It localises to the mitochondrion. In terms of biological role, may regulate the stability of some mitochondrial mRNA species. This chain is FAST kinase domain-containing protein 1, mitochondrial (fastkd1), found in Xenopus tropicalis (Western clawed frog).